Consider the following 876-residue polypeptide: Leucine--tRNA ligase (876 aa).

The 'HIGH' region motif lies at P42 to H52. Positions K634–S638 match the 'KMSKS' region motif. K637 contributes to the ATP binding site.

The protein belongs to the class-I aminoacyl-tRNA synthetase family.

Its subcellular location is the cytoplasm. The enzyme catalyses tRNA(Leu) + L-leucine + ATP = L-leucyl-tRNA(Leu) + AMP + diphosphate. This is Leucine--tRNA ligase from Neisseria gonorrhoeae (strain NCCP11945).